The sequence spans 528 residues: Protein spinster homolog 1 (528 aa).

The interval 1–38 (MAGSDTAPFLSQADDPDDGPAPGHPGLPGPMGNPKSGE) is disordered. Residue alanine 2 is modified to N-acetylalanine. 12 consecutive transmembrane segments (helical) span residues 60–80 (LIVVVLCYINLLNYMDRFTVA), 98–118 (GLIQTVFISSYMVLAPVFGYL), 126–146 (YLMCGGIAFWSLVTLGSSFIP), 160–180 (VGVGEASYSTIAPTLIADLFV), 187–207 (MLSIFYFAIPVGSGLGYIAGS), 218–238 (WALRVTPGLGVLAVLLLFLVV), 278–298 (LGFTSVAFVTGSLALWAPAFL), 323–343 (LIFGLITCLTGVLGVGLGVEI), 357–377 (LVCAAGLLGSAPFLFLALACA), 381–401 (IVATYIFIFIGETLLSMNWAI), 421–441 (FQIVLSHLLGDAGSPYLIGLI), and 465–485 (MLCAFVGALGGAAFLGTAMFI). Phosphoserine is present on serine 518.

The protein belongs to the major facilitator superfamily. Spinster (TC 2.A.1.49) family. Interacts with BCL2 and BCL2L1. In terms of tissue distribution, expressed in liver (at mRNA and protein levels).

The protein resides in the lysosome membrane. The catalysed reaction is a 1-acyl-sn-glycero-3-phosphocholine(out) + H(+)(out) = a 1-acyl-sn-glycero-3-phosphocholine(in) + H(+)(in). It carries out the reaction 1-hexadecanoyl-sn-glycero-3-phosphocholine(out) + H(+)(out) = 1-hexadecanoyl-sn-glycero-3-phosphocholine(in) + H(+)(in). The enzyme catalyses 1-(9Z-octadecenoyl)-sn-glycero-3-phosphocholine(out) + H(+)(out) = 1-(9Z-octadecenoyl)-sn-glycero-3-phosphocholine(in) + H(+)(in). It catalyses the reaction 1-(5Z,8Z,11Z,14Z-eicosatetraenoyl)-sn-glycero-3-phosphocholine(out) + H(+)(out) = 1-(5Z,8Z,11Z,14Z-eicosatetraenoyl)-sn-glycero-3-phosphocholine(in) + H(+)(in). The catalysed reaction is 1-(4Z,7Z,10Z,13Z,16Z,19Z-docosahexaenoyl)-sn-glycero-3-phosphocholine(out) + H(+)(out) = 1-(4Z,7Z,10Z,13Z,16Z,19Z-docosahexaenoyl)-sn-glycero-3-phosphocholine(in) + H(+)(in). It carries out the reaction a 1-acyl-sn-glycero-3-phosphoethanolamine(out) + H(+)(out) = a 1-acyl-sn-glycero-3-phosphoethanolamine(in) + H(+)(in). The enzyme catalyses 1-(9Z-octadecenoyl)-sn-glycero-3-phosphoethanolamine(out) + H(+)(out) = 1-(9Z-octadecenoyl)-sn-glycero-3-phosphoethanolamine(in) + H(+)(in). It catalyses the reaction 1-acyl-sn-glycero-3-phospho-(1'-sn-glycerol)(out) + H(+)(out) = 1-acyl-sn-glycero-3-phospho-(1'-sn-glycerol)(in) + H(+)(in). The catalysed reaction is 1-(9Z-octadecenoyl)-sn-glycero-3-phospho-(1'-sn-glycerol)(out) + H(+)(out) = 1-(9Z-octadecenoyl)-sn-glycero-3-phospho-(1'-sn-glycerol)(in) + H(+)(in). It carries out the reaction a 1-O-(1Z-alkenyl)-sn-glycero-3-phosphocholine(out) + H(+)(out) = a 1-O-(1Z-alkenyl)-sn-glycero-3-phosphocholine(in) + H(+)(in). The enzyme catalyses 1-(1Z-hexadecenyl)-sn-glycero-3-phosphocholine(out) + H(+)(out) = 1-(1Z-hexadecenyl)-sn-glycero-3-phosphocholine(in) + H(+)(in). It catalyses the reaction a 1-O-(1Z-alkenyl)-sn-glycero-3-phosphoethanolamine(out) + H(+)(out) = a 1-O-(1Z-alkenyl)-sn-glycero-3-phosphoethanolamine(in) + H(+)(in). The catalysed reaction is 1-O-(1Z-hexadecenyl)-sn-glycero-3-phosphoethanolamine(out) + H(+)(out) = 1-O-(1Z-hexadecenyl)-sn-glycero-3-phosphoethanolamine(in) + H(+)(in). Functionally, plays a critical role in the phospholipid salvage pathway from lysosomes to the cytosol. Mediates the rate-limiting, proton-dependent, lysosomal efflux of lysophospholipids, which can then be reacylated by acyltransferases in the endoplasmic reticulum to form phospholipids. Selective for zwitterionic headgroups such as lysophosphatidylcholine (LPC) and lysophosphatidylethanolamine (LPE), can also transport lysophosphatidylglycerol (LPG), but not other anionic lysophospholipids, sphingosine, nor sphingomyelin. Transports lysophospholipids with saturated, monounsaturated, and polyunsaturated fatty acids, such as 1-hexadecanoyl-sn-glycero-3-phosphocholine, 1-(9Z-octadecenoyl)-sn-glycero-3-phosphocholine and 1-(4Z,7Z,10Z,13Z,16Z,19Z-docosahexaenoyl)-sn-glycero-3-phosphocholine, respectively. Can also transport lysoplasmalogen (LPC with a fatty alcohol) such as 1-(1Z-hexadecenyl)-sn-glycero-3-phosphocholine. Essential player in lysosomal homeostasis. Crucial for cell survival under conditions of nutrient limitation. May be involved in necrotic or autophagic cell death. The protein is Protein spinster homolog 1 (Spns1) of Mus musculus (Mouse).